We begin with the raw amino-acid sequence, 513 residues long: MQLNSTEISDLIKQRIEQFEVVSESRNEGTIVAVSDGIIRIHGLADVMQGEMIELPGSRFAIALNLERDSVGAVVMGPYADLAEGVKVKTTGRILEVPVGRGLLGRVVNTLGEPIDGKGAIDNDGFSPVEVIAPGVIERKSVDQPVQTGYKAVDAMIPIGRGQRELIIGDRQTGKTAMAIDAIINQRDSGIKCVYVAVGQKASTIANVVRKLEEHGALANTIVVVATASEAAALQYLAPYSGCAMGEYFRDRGEDALIVYDDLSKQAVAYRQISLLLKRPPGREAYPGDVFYLHSRLLERASRVNEEYVEKFTKGAVTGQTGSLTALPIIETQAGDVSAFVPTNVISITDGQIFLETDLFNSGLRPAVNPGISVSRVGGAAQTKIIKKLSGGIRTALAQYRELAAFSQFASDLDDATRAQLEHGVRVTELMKQKQYAPMSVAAQAVSIFAAEKGYLKGVELKKVGDFEAALLSYMNSEHAALIKLINETGDYNADIEAELKAGLDKFVATQTW.

Residue 169 to 176 (GDRQTGKT) participates in ATP binding.

The protein belongs to the ATPase alpha/beta chains family. In terms of assembly, F-type ATPases have 2 components, CF(1) - the catalytic core - and CF(0) - the membrane proton channel. CF(1) has five subunits: alpha(3), beta(3), gamma(1), delta(1), epsilon(1). CF(0) has three main subunits: a(1), b(2) and c(9-12). The alpha and beta chains form an alternating ring which encloses part of the gamma chain. CF(1) is attached to CF(0) by a central stalk formed by the gamma and epsilon chains, while a peripheral stalk is formed by the delta and b chains.

The protein resides in the cell inner membrane. It catalyses the reaction ATP + H2O + 4 H(+)(in) = ADP + phosphate + 5 H(+)(out). Produces ATP from ADP in the presence of a proton gradient across the membrane. The alpha chain is a regulatory subunit. In Shewanella sp. (strain ANA-3), this protein is ATP synthase subunit alpha.